Consider the following 595-residue polypeptide: Indole-3-acetic acid-amido synthetase GH3.3 (595 aa).

Belongs to the IAA-amido conjugating enzyme family.

Functionally, catalyzes the synthesis of indole-3-acetic acid (IAA)-amino acid conjugates, providing a mechanism for the plant to cope with the presence of excess auxin. Strongly reactive with Glu, Gln, Trp, Asp, Ala, Leu, Phe, Gly, Tyr, Met, Ile and Val. Little or no product formation with His, Ser, Thr, Arg, Lys, or Cys. Also active on pyruvic and butyric acid analogs of IAA, PAA and the synthetic auxin naphthaleneacetic acid (NAA). The two chlorinated synthetic auxin herbicides 2,4-D and 3,6-dichloro-o-anisic acid (dicamba) cannot be used as substrates. This chain is Indole-3-acetic acid-amido synthetase GH3.3 (GH3.3), found in Arabidopsis thaliana (Mouse-ear cress).